We begin with the raw amino-acid sequence, 184 residues long: Rubrerythrin-2 (184 aa).

The Ferritin-like diiron domain occupies 2 to 146 (SVKNAMTADF…DAQDSAKENK (145 aa)). Fe(3+)-binding residues include glutamate 19, glutamate 52, glutamate 94, glutamate 97, glutamate 128, histidine 131, cysteine 156, cysteine 159, cysteine 171, and cysteine 174. Positions 151–184 (GKVYICPVCGFTTLDENIEQCPICGVKKDKFQAF) constitute a Rubredoxin-like domain.

Fe(3+) serves as cofactor.

The catalysed reaction is H2O2 + NADH + H(+) = NAD(+) + 2 H2O. Rubredoxin (Rd) increases the NADH consumption rate by serving as an intermediary electron-transfer shuttle between NROR and Rbr2. In terms of biological role, functions as the terminal component of an NADH peroxidase (NADH:H(2)O(2) oxidoreductase) when using NADH:rubredoxin oxidoreductase (NROR) as the electron transport intermediary from NADH to Rbr2. This is Rubrerythrin-2 (rbr2) from Clostridium acetobutylicum (strain ATCC 824 / DSM 792 / JCM 1419 / IAM 19013 / LMG 5710 / NBRC 13948 / NRRL B-527 / VKM B-1787 / 2291 / W).